Reading from the N-terminus, the 412-residue chain is Peptidase T (412 aa).

Residue histidine 78 participates in Zn(2+) binding. Aspartate 80 is a catalytic residue. Position 140 (aspartate 140) interacts with Zn(2+). Glutamate 173 acts as the Proton acceptor in catalysis. 3 residues coordinate Zn(2+): glutamate 174, aspartate 196, and histidine 379.

This sequence belongs to the peptidase M20B family. It depends on Zn(2+) as a cofactor.

The protein resides in the cytoplasm. It catalyses the reaction Release of the N-terminal residue from a tripeptide.. In terms of biological role, cleaves the N-terminal amino acid of tripeptides. The chain is Peptidase T from Edwardsiella ictaluri (strain 93-146).